The following is a 92-amino-acid chain: Sec-independent protein translocase protein TatA (92 aa).

The helical transmembrane segment at 2–22 (IPANFGGTELIILLVIILLLF) threads the bilayer. A disordered region spans residues 43–92 (KGTSGAYEELEEKKGEEEKDEGGKKEAEASGRGEEEQQARAAGEAGRKQG). A compositionally biased stretch (basic and acidic residues) spans 53–80 (EEKKGEEEKDEGGKKEAEASGRGEEEQQ).

Belongs to the TatA/E family. As to quaternary structure, the Tat system comprises two distinct complexes: a TatABC complex, containing multiple copies of TatA, TatB and TatC subunits, and a separate TatA complex, containing only TatA subunits. Substrates initially bind to the TatABC complex, which probably triggers association of the separate TatA complex to form the active translocon.

The protein resides in the cell membrane. In terms of biological role, part of the twin-arginine translocation (Tat) system that transports large folded proteins containing a characteristic twin-arginine motif in their signal peptide across membranes. TatA could form the protein-conducting channel of the Tat system. In Rubrobacter xylanophilus (strain DSM 9941 / JCM 11954 / NBRC 16129 / PRD-1), this protein is Sec-independent protein translocase protein TatA.